We begin with the raw amino-acid sequence, 288 residues long: Phospholipid phosphatase 2 (288 aa).

Residues 1 to 4 (MQRR) lie on the Cytoplasmic side of the membrane. Residues 5–25 (WVFVLLDVLCLLVASLPFAIL) form a helical membrane-spanning segment. At 26 to 51 (TLVNAPYKRGFYCGDDSIRYPYRPDT) the chain is on the lumenal side. Residues 52–72 (ITHGLMAGVTITATVILVSAG) traverse the membrane as a helical segment. Residues 73–87 (EAYLVYTDRLYSRSD) lie on the Cytoplasmic side of the membrane. A helical transmembrane segment spans residues 88 to 108 (FNNYVAAVYKVLGTFLFGAAV). Residues 109–162 (SQSLTDLAKYMIGRLRPNFLAVCDPDWSRVNCSVYVQLEKVCRGNPADVTEARL) lie on the Lumenal side of the membrane. The segment at 117 to 125 (KYMIGRLRP) is phosphatase sequence motif I. The N-linked (GlcNAc...) asparagine glycan is linked to Asn139. A helical membrane pass occupies residues 163-183 (SFYSGHSSFGMYCMVFLALYV). Residues 165–168 (YSGH) form a phosphatase sequence motif II region. The Proton donors role is filled by His168. Residues 184 to 196 (QARLCWKWARLLR) lie on the Cytoplasmic side of the membrane. Residues 197-217 (PTVQFFLVAFALYVGYTRVSD) form a helical membrane-spanning segment. A phosphatase sequence motif III region spans residues 213–224 (TRVSDYKHHWSD). The Lumenal portion of the chain corresponds to 218 to 226 (YKHHWSDVL). Residue His220 is the Nucleophile of the active site. The helical transmembrane segment at 227–247 (VGLLQGALVAALTVCYISDFF) threads the bilayer. At 248 to 288 (KARPPQHCLKEEELERKPSLSLTLTLGEADHNHYGYPHSSS) the chain is on the cytoplasmic side.

The protein belongs to the PA-phosphatase related phosphoesterase family. In terms of assembly, forms functional homodimers and homooligomers. Can also form heterooligomers with PLPP1 and PLPP3. In terms of processing, N-glycosylated. In terms of tissue distribution, found mainly in brain, pancreas and placenta.

Its subcellular location is the membrane. The protein localises to the cell membrane. The protein resides in the early endosome membrane. It localises to the endoplasmic reticulum membrane. It carries out the reaction a 1,2-diacyl-sn-glycero-3-phosphate + H2O = a 1,2-diacyl-sn-glycerol + phosphate. The enzyme catalyses 1,2-dihexadecanoyl-sn-glycero-3-phosphate + H2O = 1,2-dihexadecanoyl-sn-glycerol + phosphate. The catalysed reaction is 1,2-di-(9Z-octadecenoyl)-sn-glycero-3-phosphate + H2O = 1,2-di-(9Z-octadecenoyl)-sn-glycerol + phosphate. It catalyses the reaction a monoacyl-sn-glycero-3-phosphate + H2O = a monoacylglycerol + phosphate. It carries out the reaction (9Z)-octadecenoyl-sn-glycero-3-phosphate + H2O = (9Z-octadecenoyl)-glycerol + phosphate. The enzyme catalyses sphing-4-enine 1-phosphate + H2O = sphing-4-enine + phosphate. The catalysed reaction is an N-acylsphing-4-enine 1-phosphate + H2O = an N-acylsphing-4-enine + phosphate. It catalyses the reaction N-(octanoyl)-sphing-4-enine-1-phosphate + H2O = N-octanoylsphing-4-enine + phosphate. It carries out the reaction N-(9Z-octadecenoyl)-ethanolamine phosphate + H2O = N-(9Z-octadecenoyl) ethanolamine + phosphate. Its pathway is lipid metabolism; phospholipid metabolism. Magnesium-independent phospholipid phosphatase. Insensitive to N-ethylmaleimide. Inhibited by sphingosine, zinc ions and modestly by propanolol. Functionally, magnesium-independent phospholipid phosphatase that catalyzes the dephosphorylation of a variety of glycerolipid and sphingolipid phosphate esters including phosphatidate/PA, lysophosphatidate/LPA, sphingosine 1-phosphate/S1P and ceramide 1-phosphate/C1P. Has no apparent extracellular phosphatase activity and therefore most probably acts intracellularly. Also acts on N-oleoyl ethanolamine phosphate/N-(9Z-octadecenoyl)-ethanolamine phosphate, a potential physiological compound. Through dephosphorylation of these bioactive lipid mediators produces new bioactive compounds and may regulate signal transduction in different cellular processes. Indirectly regulates, for instance, cell cycle G1/S phase transition through its phospholipid phosphatase activity. This Homo sapiens (Human) protein is Phospholipid phosphatase 2.